We begin with the raw amino-acid sequence, 257 residues long: Ribonuclease HII (257 aa).

The region spanning 72–257 (TYIAGIDEVG…FAPIKDMIQK (186 aa)) is the RNase H type-2 domain. Positions 78, 79, and 170 each coordinate a divalent metal cation.

The protein belongs to the RNase HII family. The cofactor is Mn(2+). Mg(2+) is required as a cofactor.

The protein localises to the cytoplasm. The catalysed reaction is Endonucleolytic cleavage to 5'-phosphomonoester.. Its function is as follows. Endonuclease that specifically degrades the RNA of RNA-DNA hybrids. The chain is Ribonuclease HII from Bacillus mycoides (strain KBAB4) (Bacillus weihenstephanensis).